A 215-amino-acid polypeptide reads, in one-letter code: UPF0502 protein YceH (215 aa).

It belongs to the UPF0502 family.

This Salmonella arizonae (strain ATCC BAA-731 / CDC346-86 / RSK2980) protein is UPF0502 protein YceH.